The chain runs to 212 residues: Ribosomal RNA large subunit methyltransferase E (212 aa).

Residues glycine 57, tryptophan 59, aspartate 77, aspartate 93, and aspartate 122 each contribute to the S-adenosyl-L-methionine site. Lysine 162 serves as the catalytic Proton acceptor.

It belongs to the class I-like SAM-binding methyltransferase superfamily. RNA methyltransferase RlmE family.

The protein resides in the cytoplasm. It catalyses the reaction uridine(2552) in 23S rRNA + S-adenosyl-L-methionine = 2'-O-methyluridine(2552) in 23S rRNA + S-adenosyl-L-homocysteine + H(+). Specifically methylates the uridine in position 2552 of 23S rRNA at the 2'-O position of the ribose in the fully assembled 50S ribosomal subunit. This Coxiella burnetii (strain RSA 493 / Nine Mile phase I) protein is Ribosomal RNA large subunit methyltransferase E.